Reading from the N-terminus, the 198-residue chain is Carnitine operon protein CaiE (198 aa).

The segment at 179-198 (VEENRPRLKGTTDVKPKSAQ) is disordered. Basic and acidic residues predominate over residues 180–198 (EENRPRLKGTTDVKPKSAQ).

Belongs to the transferase hexapeptide repeat family.

It functions in the pathway amine and polyamine metabolism; carnitine metabolism. Its function is as follows. Overproduction of CaiE stimulates the activity of CaiB and CaiD. This Salmonella typhi protein is Carnitine operon protein CaiE.